A 606-amino-acid polypeptide reads, in one-letter code: V-type proton ATPase catalytic subunit A (606 aa).

239 to 246 (GAFGCGKT) provides a ligand contact to ATP.

It belongs to the ATPase alpha/beta chains family. V-ATPase is a heteromultimeric enzyme made up of two complexes: the ATP-hydrolytic V1 complex and the proton translocation V0 complex. The V1 complex consists of three catalytic AB heterodimers that form a heterohexamer, three peripheral stalks each consisting of EG heterodimers, one central rotor including subunits D and F, and the regulatory subunits C and H. The proton translocation complex V0 consists of the proton transport subunit a, a ring of proteolipid subunits c9c'', rotary subunit d, subunits e and f, and the accessory subunits vah-19/Ac45 and vah-20/PRR.

The enzyme catalyses ATP + H2O + 4 H(+)(in) = ADP + phosphate + 5 H(+)(out). Functionally, catalytic subunit of the V1 complex of vacuolar(H+)-ATPase (V-ATPase), a multisubunit enzyme composed of a peripheral complex (V1) that hydrolyzes ATP and a membrane integral complex (V0) that translocates protons. V-ATPase is responsible for acidifying and maintaining the pH of intracellular compartments and in some cell types, is targeted to the plasma membrane, where it is responsible for acidifying the extracellular environment. Required along with other vacuolar ATPase components for the removal of protein aggregates which form in immature oocytes in the distal gonad. This removal occurs as the oocytes mature and move to the proximal gonad, is triggered by the introduction of sperm through mating and occurs before fertilization. The introduction of sperm triggers V-ATPase accumulation in proximal oocytes and induces lysosomal acidification which leads to engulfing of protein aggregates by lysosomes and subsequent clearance of the aggregates. Lysosomal acidification also leads to changes in mitochondrial morphology and function. Mitochondria in distal immature oocytes are fragmented, produce high levels of reactive oxygen species (ROS) and have high membrane potential, indicative of metabolic inactivity. In contrast, mitochondria in proximal mature oocytes are tubular with lower ROS levels and membrane potential, indicative of an active metabolic state required for aggregate mobilization before clearance. Involved in receptor-mediated endocytosis. The protein is V-type proton ATPase catalytic subunit A of Caenorhabditis briggsae.